A 144-amino-acid chain; its full sequence is Translation initiation factor 5A (144 aa).

At Lys-38 the chain carries Hypusine.

The protein belongs to the eIF-5A family.

The protein localises to the cytoplasm. Its function is as follows. Functions by promoting the formation of the first peptide bond. The chain is Translation initiation factor 5A from Nanoarchaeum equitans (strain Kin4-M).